Consider the following 124-residue polypeptide: MQTVIFIGIFGALGCLCRYYLSGWVYDIVGRAFPYGTFAVNIIGAFLIGLIMEFSLRSTLVSPQLRVGLTIGFLGGLTTFSTFSYETFRLLEDGELLIASVNVLTSVLVCLVFTWLGIAAARYI.

The next 4 helical transmembrane spans lie at 4-24 (VIFIGIFGALGCLCRYYLSGW), 32-52 (AFPYGTFAVNIIGAFLIGLIM), 68-88 (GLTIGFLGGLTTFSTFSYETF), and 96-116 (LLIASVNVLTSVLVCLVFTWL). Positions 75 and 78 each coordinate Na(+).

It belongs to the fluoride channel Fluc/FEX (TC 1.A.43) family.

The protein localises to the cell inner membrane. The enzyme catalyses fluoride(in) = fluoride(out). With respect to regulation, na(+) is not transported, but it plays an essential structural role and its presence is essential for fluoride channel function. In terms of biological role, fluoride-specific ion channel. Important for reducing fluoride concentration in the cell, thus reducing its toxicity. This chain is Fluoride-specific ion channel FluC, found in Geotalea daltonii (strain DSM 22248 / JCM 15807 / FRC-32) (Geobacter daltonii).